The sequence spans 232 residues: Lipopolysaccharide core heptose(II) kinase WaaY (232 aa).

The protein belongs to the protein kinase superfamily. RfaY/WaaY family.

The catalysed reaction is alpha-D-Glc-(1-&gt;3)-[L-alpha-D-Hep-(1-&gt;7)]-L-alpha-D-Hep-(1-&gt;3)-4-O-PO3(2-)-L-alpha-D-Hep-(1-&gt;5)-[alpha-Kdo-(2-&gt;4)]-alpha-Kdo-(2-&gt;6)-lipid A + ATP = alpha-D-Glc-(1-&gt;3)-[L-alpha-D-Hep-(1-&gt;7)]-4-O-PO3(2-)-L-alpha-D-Hep-(1-&gt;3)-4-O-PO3(2-)-L-alpha-D-Hep-(1-&gt;5)-[alpha-Kdo-(2-&gt;4)]-alpha-Kdo-(2-&gt;6)-lipid A + ADP + H(+). Its pathway is bacterial outer membrane biogenesis; LPS core biosynthesis. In terms of biological role, kinase involved in the biosynthesis of the core oligosaccharide region of lipopolysaccharide (LPS). Catalyzes the phosphorylation of the second heptose unit (HepII) of the inner core. The protein is Lipopolysaccharide core heptose(II) kinase WaaY of Escherichia coli (strain K12).